Reading from the N-terminus, the 408-residue chain is MHQFEEELTCSICYSLFEDPRVLPCSHTFCRSCLEGVIQLSSNFSIWRPLRVPLKCPNCRSIVEIPASGTESLPINFALKAIIEKYRQEDHSDVATCSEHYRQPLNVYCLLDKKLVCGHCLTIGKHNGHPIDDLHSAYLKEKESSGKILEQLTDKHWSDVCLLIEKLKEQKAQCESIVQDDKKVVVQYFKKLSETLEHKKQVLLAALDEINRQILEEYEPHIEKLKKIREEQLELMSLNTSIQKEESPLVFLEKVDNVHQRIKALKEKELPDVKPVEVYPRVGHLLKDVWSKTEIGQINKILTPKIKLVPKRKLHSKNSEKERGKPEELLQAANPLSVTFIFTVIIAIAVLSFHKPISSVVIESIPTHISDFFGFLYQDFCTCMQNTVDVVCHKLNSLAEFLGGIVPF.

The RING-type zinc finger occupies C10–R60. The segment at S92–L134 adopts a B box-type zinc-finger fold. Zn(2+)-binding residues include C97, H100, C120, and H126. Residues L163–S247 adopt a coiled-coil conformation. A helical membrane pass occupies residues A333–F353.

This sequence belongs to the TRIM/RBCC family. In terms of assembly, interacts with ECSIT.

The protein localises to the endoplasmic reticulum membrane. Its function is as follows. May serve as a multifunctional regulator for innate immune signaling pathways. This is Tripartite motif-containing protein 59 (TRIM59) from Gallus gallus (Chicken).